Reading from the N-terminus, the 528-residue chain is Purine-cytosine permease FCY21 (528 aa).

Topologically, residues 1 to 90 are cytoplasmic; it reads MPQTHEMSLN…DDSILNAASM (90 aa). Phosphoserine is present on Ser-43. Thr-46 carries the phosphothreonine modification. The chain crosses the membrane as a helical span at residues 91-111; it reads WFSANMVLPAYAIGALGPMVF. Topologically, residues 112–118 are extracellular; it reads DLNFGQS. Residues 119-139 form a helical membrane-spanning segment; sequence VFVIIFFNLLGLVSVAFFSVF. Topologically, residues 140–161 are cytoplasmic; sequence GAELGLRQMILSRYLVGNIAAR. Residues 162–182 traverse the membrane as a helical segment; it reads IFSFINFIACIGWGIVNTVAS. At 183 to 198 the chain is on the extracellular side; sequence SQVLNMVNPGHQCPLW. A helical membrane pass occupies residues 199–219; that stretch reads AGCIVIIGATVIVTFFGYGVI. The Cytoplasmic portion of the chain corresponds to 220-221; sequence HA. Residues 222–242 form a helical membrane-spanning segment; it reads YEKWAWVPNFAVFLVIIARLA. Residues 243–260 lie on the Extracellular side of the membrane; the sequence is RSKKFVLGEWTSGPTTAG. Residues 261–281 form a helical membrane-spanning segment; sequence NVLSFGSTVYGFAAGWTTYAA. Residues 282-295 lie on the Cytoplasmic side of the membrane; the sequence is DYTVYMPRKTNKYK. A helical membrane pass occupies residues 296 to 316; it reads IFFSLVVGLATPLYFTMILGA. The Extracellular portion of the chain corresponds to 317 to 340; sequence AVAMAAIGDPAWKTYYDENSIGGL. The helical transmembrane segment at 341–361 threads the bilayer; sequence TFAVLVPNSVHGFGQFCCVLL. At 362 to 393 the chain is on the cytoplasmic side; the sequence is SLSTIANNVPNMYTIALSVQATWEPLAKVPRV. The helical transmembrane segment at 394 to 414 threads the bilayer; it reads IWTLLGNAAALGIAIPACYYF. The Extracellular segment spans residues 415–416; it reads ST. Residues 417–437 traverse the membrane as a helical segment; sequence FMNYFMDSIGYYLAIYIAIAC. Residues 438-460 are Cytoplasmic-facing; the sequence is SEHFIYRRSFSAYNVDDWDSWER. Residues 461–481 traverse the membrane as a helical segment; it reads LPIGIAGTAALIVGAFGVALG. At 482-493 the chain is on the extracellular side; the sequence is MCQTYWVGEISR. A helical transmembrane segment spans residues 494 to 514; it reads LIGDYGGDIGFELGLSWAFIV. Topologically, residues 515 to 528 are cytoplasmic; it reads YNIARPFELKYFGR.

This sequence belongs to the purine-cytosine permease (2.A.39) family.

It is found in the membrane. Functionally, probable purine-cytosine permease. This is Purine-cytosine permease FCY21 (FCY21) from Saccharomyces cerevisiae (strain ATCC 204508 / S288c) (Baker's yeast).